The primary structure comprises 623 residues: uncharacterized protein (623 aa).

A run of 5 helical transmembrane segments spans residues 242 to 262 (IALALMILALLLGLRKLITWL), 288 to 308 (IVSPVSVFLALFSCDVALDIF), 318 to 338 (VSMWVGAVYIMLLAWLVIALF), 361 to 381 (VINLILKVVYFLIFIVALLGV), and 387 to 407 (FNVSAIIASLGIGGLAVALAV).

This sequence belongs to the MscS (TC 1.A.23) family.

The protein localises to the cell membrane. This is an uncharacterized protein from Helicobacter pylori (strain J99 / ATCC 700824) (Campylobacter pylori J99).